Here is an 890-residue protein sequence, read N- to C-terminus: Alanine--tRNA ligase (890 aa).

4 residues coordinate Zn(2+): H578, H582, C689, and H693.

Belongs to the class-II aminoacyl-tRNA synthetase family. The cofactor is Zn(2+).

It is found in the cytoplasm. It catalyses the reaction tRNA(Ala) + L-alanine + ATP = L-alanyl-tRNA(Ala) + AMP + diphosphate. Catalyzes the attachment of alanine to tRNA(Ala) in a two-step reaction: alanine is first activated by ATP to form Ala-AMP and then transferred to the acceptor end of tRNA(Ala). Also edits incorrectly charged Ser-tRNA(Ala) and Gly-tRNA(Ala) via its editing domain. The polypeptide is Alanine--tRNA ligase (Deinococcus radiodurans (strain ATCC 13939 / DSM 20539 / JCM 16871 / CCUG 27074 / LMG 4051 / NBRC 15346 / NCIMB 9279 / VKM B-1422 / R1)).